Here is a 146-residue protein sequence, read N- to C-terminus: Leghemoglobin 1 (146 aa).

Positions Gly2–Gly146 constitute a Globin domain. Residue Tyr29 is modified to Nitrated tyrosine. Position 44 (Ser44) interacts with heme b. At Ser44 the chain carries Phosphoserine. Residue His61 coordinates O2. Residues Lys64, His93, and Lys96 each coordinate heme b. Position 134 is a nitrated tyrosine (Tyr134).

Belongs to the plant globin family. Monomer. Nitrated in effective nodules and particularly in hypoxic conditions; this mechanism may play a protective role in the symbiosis by buffering toxic peroxynitrite NO(2)(-). Nitration level decrease during nodule senescence. Post-translationally, phosphorylation at Ser-44 disrupts the molecular environment of its porphyrin ring oxygen binding pocket, thus leading to a reduced oxygen consumption and to the delivery of oxygen O(2) to symbiosomes. As to expression, root nodules.

It is found in the cytoplasm. It localises to the cytosol. The protein resides in the nucleus. Functionally, leghemoglobin that reversibly binds oxygen O(2) through a pentacoordinated heme iron. In root nodules, facilitates the diffusion of oxygen to the bacteroids while preventing the bacterial nitrogenase from being inactivated by buffering dioxygen, nitric oxide and carbon monoxide, and promoting the formation of reactive oxygen species (ROS, e.g. H(2)O(2)). This role is essential for symbiotic nitrogen fixation (SNF). In Medicago truncatula (Barrel medic), this protein is Leghemoglobin 1.